Reading from the N-terminus, the 182-residue chain is Ribosome maturation factor RimM (182 aa).

One can recognise a PRC barrel domain in the interval 103–182; sequence VGDYYWKDLI…TIEVDWDPGF (80 aa).

This sequence belongs to the RimM family. In terms of assembly, binds ribosomal protein uS19.

Its subcellular location is the cytoplasm. Functionally, an accessory protein needed during the final step in the assembly of 30S ribosomal subunit, possibly for assembly of the head region. Essential for efficient processing of 16S rRNA. May be needed both before and after RbfA during the maturation of 16S rRNA. It has affinity for free ribosomal 30S subunits but not for 70S ribosomes. In Pectobacterium atrosepticum (strain SCRI 1043 / ATCC BAA-672) (Erwinia carotovora subsp. atroseptica), this protein is Ribosome maturation factor RimM.